Reading from the N-terminus, the 85-residue chain is 4-hydroxyphenylacetate decarboxylase small subunit (85 aa).

Residues histidine 4, cysteine 7, cysteine 20, cysteine 34, cysteine 43, cysteine 46, cysteine 60, and cysteine 78 each coordinate [4Fe-4S] cluster.

It belongs to the HPA decarboxylase small subunit family. In terms of assembly, heterooctamer consisting of 4 large (HpdB) subunits and 4 small (HpdC) subunits, arranged as a tetramer of heterodimers. [4Fe-4S] cluster serves as cofactor.

It carries out the reaction 4-hydroxyphenylacetate + H(+) = 4-methylphenol + CO2. The catalysed reaction is 3,4-dihydroxyphenylacetate + H(+) = 4-methylcatechol + CO2. Functionally, component of the HPA decarboxylase that decarboxylates phenylacetates with a hydroxyl group in the p-position. Active toward 4-hydroxyphenylacetate and 3,4-dihydroxyphenylacetate, forming 4-methylphenol and 4-methylcatechol, respectively. Is likely involved in the catabolism of aromatic amino acids such as tyrosine fermentation. 4-methylphenol (p-cresol) formation provides metabolic toxicity, which allows an active suppression of other microbes and may provide growth advantages for the producers in highly competitive environments. The small subunit is essential for enzymatic activity of HPA decarboxylase, and also seems to be involved in the regulation of the enzyme oligomeric state and catalytic activity. The polypeptide is 4-hydroxyphenylacetate decarboxylase small subunit (Clostridioides difficile (strain CD196) (Peptoclostridium difficile)).